A 235-amino-acid chain; its full sequence is Probable inactive serine protease 37 (235 aa).

An N-terminal signal peptide occupies residues 1-19; that stretch reads MKFIFYLSVLTGTFLFADS. Residues 20–233 form the Peptidase S1 domain; the sequence is SVQKEDPAPY…YVSWIENTAK (214 aa). 3 cysteine pairs are disulfide-bonded: Cys-40/Cys-56, Cys-131/Cys-198, and Cys-163/Cys-177.

This sequence belongs to the peptidase S1 family.

The protein localises to the cytoplasmic vesicle. The protein resides in the secretory vesicle. Its subcellular location is the acrosome. It localises to the secreted. Its function is as follows. Plays a role in male fertility. May have a role in sperm migration or binding to zona-intact eggs. Involved in the activation of the proacrosin/acrosin system. This is Probable inactive serine protease 37 from Macaca fascicularis (Crab-eating macaque).